A 115-amino-acid polypeptide reads, in one-letter code: uncharacterized protein (115 aa).

Over residues T90–R100 the composition is skewed to basic residues. The segment at T90–G115 is disordered.

This is an uncharacterized protein from Saccharomyces cerevisiae (strain ATCC 204508 / S288c) (Baker's yeast).